Reading from the N-terminus, the 796-residue chain is Merozoite surface protein P92 (796 aa).

Residues 1 to 26 form the signal peptide; sequence MFAVNLKICIFLSLVSFLLQCKNTLA. Asn-27, Asn-37, Asn-65, Asn-71, Asn-168, Asn-240, Asn-275, Asn-359, Asn-502, Asn-511, Asn-607, Asn-633, Asn-728, and Asn-765 each carry an N-linked (GlcNAc...) asparagine glycan. One can recognise a 6-Cys domain in the interval 571–720; that stretch reads KYEGIDLTDS…NSIKQEINKK (150 aa). Intrachain disulfides connect Cys-614-Cys-691 and Cys-625-Cys-689.

As to quaternary structure, interacts with host complement factor CFH isoform 1 (via sushi 4-6 domains) and CFH isoform FHL-1 (via sushi 4-6 domains); this interaction recruits CFH onto the merozoite surface preventing complement-mediated cell lysis. The interaction does not affect CFH activity.

The protein resides in the cell surface. The protein localises to the cell membrane. Functionally, during the asexual blood stage, recruits host complement factor H CFH to the surface of merozoites resulting in the down-regulation of the host complement alternative pathway and thus, protecting merozoites from complement-mediated lysis. The chain is Merozoite surface protein P92 from Plasmodium falciparum (isolate 3D7).